A 222-amino-acid chain; its full sequence is Pleckstrin homology domain-containing family B member 2 (222 aa).

The 108-residue stretch at 2–109 folds into the PH domain; sequence AFVKSGWLLR…WKFTLQDSRT (108 aa). Position 20 (Lys20) interacts with a 1,2-diacyl-sn-glycero-3-phospho-L-serine.

Its subcellular location is the recycling endosome membrane. Functionally, involved in retrograde transport of recycling endosomes. The sequence is that of Pleckstrin homology domain-containing family B member 2 (PLEKHB2) from Homo sapiens (Human).